The chain runs to 718 residues: Methionine--tRNA ligase (718 aa).

The short motif at 27 to 37 (PYANGQIHIGH) is the 'HIGH' region element. Zn(2+) contacts are provided by Cys-158, Cys-161, Cys-171, and Cys-174. The short motif at 348–352 (KMSKS) is the 'KMSKS' region element. Lys-351 contacts ATP. The tRNA-binding domain occupies 612–718 (DFAKIDLRIA…SGAKPGMRVK (107 aa)).

This sequence belongs to the class-I aminoacyl-tRNA synthetase family. MetG type 1 subfamily. In terms of assembly, homodimer. Zn(2+) is required as a cofactor.

The protein resides in the cytoplasm. The catalysed reaction is tRNA(Met) + L-methionine + ATP = L-methionyl-tRNA(Met) + AMP + diphosphate. Functionally, is required not only for elongation of protein synthesis but also for the initiation of all mRNA translation through initiator tRNA(fMet) aminoacylation. The sequence is that of Methionine--tRNA ligase from Burkholderia cenocepacia (strain ATCC BAA-245 / DSM 16553 / LMG 16656 / NCTC 13227 / J2315 / CF5610) (Burkholderia cepacia (strain J2315)).